Reading from the N-terminus, the 575-residue chain is MSDQFDAKAFLKTVTSQPGVYRMYDAGGTVIYVGKAKDLKKRLSSYFRSNLASRKTEALVAQIQQIDVTVTHTETEALLLEHNYIKLYQPRYNVLLRDDKSYPFIFLSGDTHPRLAMHRGAKHAKGEYFGPFPNGYAVRETLALLQKIFPIRQCENSVYRNRSRPCLQYQIGRCLGPCVEGLVSEEEYAQQVEYVRLFLSGKDDQVLTQLISRMETASQNLEFEEAARIRDQIQAVRRVTEKQFVSNTGDDLDVIGVAFDAGMACVHVLFIRQGKVLGSRSYFPKVPGGTELSEVVETFVGQFYLQGSQMRTLPGEILLDFNLSDKTLLADSLSELAGRKINVQTKPRGDRARYLKLARTNAATALTSKLSQQSTVHQRLTALASVLKLPEVKRMECFDISHTMGEQTVASCVVFDANGPLRAEYRRYNITGITPGDDYAAMNQVLRRRYGKAIDDSKIPDVILIDGGKGQLAQAKNVFAELDVSWDKNHPLLLGVAKGADRKAGLETLFFEPEGEGFSLPPDSPALHVIQHIRDESHDHAIGGHRKKRAKVKNTSSLETIEGVGPKRRQNVVEN.

Residues 16–94 enclose the GIY-YIG domain; the sequence is SQPGVYRMYD…IKLYQPRYNV (79 aa). Residues 204–239 form the UVR domain; sequence DQVLTQLISRMETASQNLEFEEAARIRDQIQAVRRV.

It belongs to the UvrC family. Interacts with UvrB in an incision complex.

The protein resides in the cytoplasm. Its function is as follows. The UvrABC repair system catalyzes the recognition and processing of DNA lesions. UvrC both incises the 5' and 3' sides of the lesion. The N-terminal half is responsible for the 3' incision and the C-terminal half is responsible for the 5' incision. The sequence is that of UvrABC system protein C from Shigella dysenteriae serotype 1 (strain Sd197).